The chain runs to 160 residues: Cytochrome b6-f complex subunit 4 (160 aa).

Transmembrane regions (helical) follow at residues 36-56 (LLYM…SLAV), 95-115 (LIGI…PFIE), and 131-151 (AVFL…TLPI).

Belongs to the cytochrome b family. PetD subfamily. As to quaternary structure, the 4 large subunits of the cytochrome b6-f complex are cytochrome b6, subunit IV (17 kDa polypeptide, petD), cytochrome f and the Rieske protein, while the 4 small subunits are petG, petL, petM and petN. The complex functions as a dimer.

It localises to the plastid. It is found in the chloroplast thylakoid membrane. Component of the cytochrome b6-f complex, which mediates electron transfer between photosystem II (PSII) and photosystem I (PSI), cyclic electron flow around PSI, and state transitions. This is Cytochrome b6-f complex subunit 4 from Bigelowiella natans (Pedinomonas minutissima).